A 104-amino-acid polypeptide reads, in one-letter code: Large ribosomal subunit protein uL23 (104 aa).

It belongs to the universal ribosomal protein uL23 family. Part of the 50S ribosomal subunit. Contacts protein L29, and trigger factor when it is bound to the ribosome.

In terms of biological role, one of the early assembly proteins it binds 23S rRNA. One of the proteins that surrounds the polypeptide exit tunnel on the outside of the ribosome. Forms the main docking site for trigger factor binding to the ribosome. The sequence is that of Large ribosomal subunit protein uL23 from Leptospira interrogans serogroup Icterohaemorrhagiae serovar copenhageni (strain Fiocruz L1-130).